A 303-amino-acid polypeptide reads, in one-letter code: MGFGPYYFVKGLPLYELITHEFINTFVKKGSCYALTYNTNIDEDNTVALLPNGKLILSLDKDTYEETGLQGCPSQYSGRKTMRFIVSIDLMDLSSNLDSKKYKRVSWAFKEKKPLKFDFLLAWHQTGAEGSTMMSYFSGYGIQEHQPKIALSTTPDLRCPVLRSGLLGGEPEAACSAHELFDWLGAVFSHADLNNEPYNFVSTYCCPQPSSVVAQASLCSVTGFLLPERICVLLEQLCRYFDEPKLAPWVTLSVQGFADSPVSWRESEHGFQKGGEHLYNFVIFNNRDYWLQMAVGADDDCPP.

Component of nuclear RNase P and RNase MRP ribonucleoproteins. RNase P consists of a catalytic RNA moiety and about 10 protein subunits; POP1, POP4, POP5, POP7, RPP14, RPP21, RPP25, RPP30, RPP38 and RPP40. Within the RNase P complex, POP1, POP7 and RPP25 form the 'finger' subcomplex, POP5, RPP14, RPP40 and homodimeric RPP30 form the 'palm' subcomplex, and RPP21, POP4 and RPP38 form the 'wrist' subcomplex. All subunits of the RNase P complex interact with the catalytic RNA. Several subunits of RNase P are also part of the RNase MRP complex. RNase MRP consists of a catalytic RNA moiety and about 8 protein subunits; POP1, POP7, RPP25, RPP30, RPP38, RPP40 and possibly also POP4 and POP5.

It is found in the nucleus. The protein resides in the nucleolus. In terms of biological role, component of ribonuclease P, a ribonucleoprotein complex that generates mature tRNA molecules by cleaving their 5'-ends. Also a component of the MRP ribonuclease complex, which cleaves pre-rRNA sequences. The sequence is that of Ribonuclease P protein subunit p40 (RPP40) from Bos taurus (Bovine).